Here is a 229-residue protein sequence, read N- to C-terminus: ATP synthase subunit a 3 (229 aa).

A run of 6 helical transmembrane segments spans residues 25-45 (ADAV…SFLA), 86-106 (VATI…PGFF), 111-131 (NINT…VVGI), 142-162 (FCGP…IGHL), 181-201 (LVLI…MMLM), and 202-222 (GVLV…IYIQ).

It belongs to the ATPase A chain family. F-type ATPases have 2 components, CF(1) - the catalytic core - and CF(0) - the membrane proton channel. CF(1) has five subunits: alpha(3), beta(3), gamma(1), delta(1), epsilon(1). CF(0) has three main subunits: a(1), b(2) and c(9-12). The alpha and beta chains form an alternating ring which encloses part of the gamma chain. CF(1) is attached to CF(0) by a central stalk formed by the gamma and epsilon chains, while a peripheral stalk is formed by the delta and b chains.

It is found in the cell inner membrane. Functionally, key component of the proton channel; it plays a direct role in the translocation of protons across the membrane. This chain is ATP synthase subunit a 3, found in Pelobacter propionicus (strain DSM 2379 / NBRC 103807 / OttBd1).